The sequence spans 315 residues: L-lactate dehydrogenase (315 aa).

Residues valine 17, aspartate 38, lysine 43, tyrosine 69, and 83 to 84 contribute to the NAD(+) site; that span reads GA. Substrate is bound by residues glutamine 86 and arginine 92. NAD(+)-binding positions include serine 105, 122-124, and serine 147; that span reads ATN. 124-127 is a binding site for substrate; sequence NPVD. 152–155 is a binding site for substrate; it reads DTAR. The beta-D-fructose 1,6-bisphosphate site is built by arginine 157 and histidine 172. The active-site Proton acceptor is histidine 179. The residue at position 223 (tyrosine 223) is a Phosphotyrosine. Position 232 (threonine 232) interacts with substrate.

This sequence belongs to the LDH/MDH superfamily. LDH family. As to quaternary structure, homotetramer.

Its subcellular location is the cytoplasm. It carries out the reaction (S)-lactate + NAD(+) = pyruvate + NADH + H(+). The protein operates within fermentation; pyruvate fermentation to lactate; (S)-lactate from pyruvate: step 1/1. Its activity is regulated as follows. Allosterically activated by fructose 1,6-bisphosphate (FBP). In terms of biological role, catalyzes the conversion of lactate to pyruvate. This Macrococcus caseolyticus (strain JCSC5402) (Macrococcoides caseolyticum) protein is L-lactate dehydrogenase.